A 510-amino-acid chain; its full sequence is Probable cytosol aminopeptidase (510 aa).

Mn(2+)-binding residues include Lys282 and Asp287. Lys294 is an active-site residue. Asp305, Asp364, and Glu366 together coordinate Mn(2+). The active site involves Arg368.

This sequence belongs to the peptidase M17 family. Mn(2+) is required as a cofactor.

It localises to the cytoplasm. The catalysed reaction is Release of an N-terminal amino acid, Xaa-|-Yaa-, in which Xaa is preferably Leu, but may be other amino acids including Pro although not Arg or Lys, and Yaa may be Pro. Amino acid amides and methyl esters are also readily hydrolyzed, but rates on arylamides are exceedingly low.. The enzyme catalyses Release of an N-terminal amino acid, preferentially leucine, but not glutamic or aspartic acids.. Functionally, presumably involved in the processing and regular turnover of intracellular proteins. Catalyzes the removal of unsubstituted N-terminal amino acids from various peptides. This is Probable cytosol aminopeptidase from Cupriavidus metallidurans (strain ATCC 43123 / DSM 2839 / NBRC 102507 / CH34) (Ralstonia metallidurans).